A 693-amino-acid chain; its full sequence is Golgin subfamily A member 6D (693 aa).

Positions 14–611 (LEESRQNKLA…KLLELQELVL (598 aa)) form a coiled coil. 3 disordered regions span residues 20 to 70 (NKLA…GDSQ), 497 to 547 (LPGE…GTEQ), and 662 to 693 (VEPA…MQDT). The segment covering 537–547 (LPKEKADGTEQ) has biased composition (basic and acidic residues). The span at 674–693 (PHNNPTVQQIVQLSPVMQDT) shows a compositional bias: polar residues.

It belongs to the GOLGA6 family.

This is Golgin subfamily A member 6D (GOLGA6D) from Homo sapiens (Human).